The primary structure comprises 156 residues: ATP synthase subunit b (156 aa).

The helical transmembrane segment at 7-27 (LIGQTVAFIIFVWFCMKFVWP) threads the bilayer.

This sequence belongs to the ATPase B chain family. In terms of assembly, F-type ATPases have 2 components, F(1) - the catalytic core - and F(0) - the membrane proton channel. F(1) has five subunits: alpha(3), beta(3), gamma(1), delta(1), epsilon(1). F(0) has three main subunits: a(1), b(2) and c(10-14). The alpha and beta chains form an alternating ring which encloses part of the gamma chain. F(1) is attached to F(0) by a central stalk formed by the gamma and epsilon chains, while a peripheral stalk is formed by the delta and b chains.

Its subcellular location is the cell inner membrane. Its function is as follows. F(1)F(0) ATP synthase produces ATP from ADP in the presence of a proton or sodium gradient. F-type ATPases consist of two structural domains, F(1) containing the extramembraneous catalytic core and F(0) containing the membrane proton channel, linked together by a central stalk and a peripheral stalk. During catalysis, ATP synthesis in the catalytic domain of F(1) is coupled via a rotary mechanism of the central stalk subunits to proton translocation. In terms of biological role, component of the F(0) channel, it forms part of the peripheral stalk, linking F(1) to F(0). The chain is ATP synthase subunit b from Shewanella oneidensis (strain ATCC 700550 / JCM 31522 / CIP 106686 / LMG 19005 / NCIMB 14063 / MR-1).